Here is a 535-residue protein sequence, read N- to C-terminus: INSYN2B protein (535 aa).

3 disordered regions span residues 23-85 (LVKQ…SFPR), 215-346 (EARE…RSSS), and 360-387 (KLPS…PRQE). Polar residues predominate over residues 46-59 (KNPTGVTEVNTQTP). Residues 219–232 (SALSPESSAEESNS) are compositionally biased toward low complexity. Composition is skewed to polar residues over residues 258 to 269 (CSNTNSSASNMP), 307 to 319 (RTHS…SRSQ), and 361 to 375 (LPSQ…TGVG). Positions 411–448 (DLQGRLQSVEESLHSNQEKIKVLLNVIQDLEKAHALTE) form a coiled coil. The tract at residues 493–528 (LEEAEPTEEAPSPPKSPAEAPVPEKQDLRRKSKKVK) is disordered.

It belongs to the INSYN2 family.

This chain is INSYN2B protein (Insyn2b), found in Mus musculus (Mouse).